The following is a 302-amino-acid chain: Stanniocalcin-2 (302 aa).

An N-terminal signal peptide occupies residues 1 to 24 (MCAERLGHFMTLALVLATIDPARG). Residues 23 to 44 (RGTDATNPPEGPQDRSSQQKGR) are disordered. An N-linked (GlcNAc...) asparagine glycan is attached at asparagine 73. The interval 218–302 (PPTAPPERQP…EQSEYSDIRR (85 aa)) is disordered. Residues 227–264 (PQVDRAKLSRAHHGEAGHHLPEPSSRETGRGAKGERGS) show a composition bias toward basic and acidic residues. Residues serine 250 and serine 251 each carry the phosphoserine modification. Position 254 is a phosphothreonine (threonine 254).

This sequence belongs to the stanniocalcin family. As to quaternary structure, homodimer; disulfide-linked.

It is found in the secreted. Has an anti-hypocalcemic action on calcium and phosphate homeostasis. The protein is Stanniocalcin-2 (STC2) of Macaca nemestrina (Pig-tailed macaque).